The chain runs to 190 residues: Adenine phosphoribosyltransferase (190 aa).

Belongs to the purine/pyrimidine phosphoribosyltransferase family. Homodimer.

The protein localises to the cytoplasm. It catalyses the reaction AMP + diphosphate = 5-phospho-alpha-D-ribose 1-diphosphate + adenine. The protein operates within purine metabolism; AMP biosynthesis via salvage pathway; AMP from adenine: step 1/1. In terms of biological role, catalyzes a salvage reaction resulting in the formation of AMP, that is energically less costly than de novo synthesis. The chain is Adenine phosphoribosyltransferase from Cupriavidus metallidurans (strain ATCC 43123 / DSM 2839 / NBRC 102507 / CH34) (Ralstonia metallidurans).